The following is a 401-amino-acid chain: MQVSIACTEHNLKSRNGEDRLLSKQSSTAPNVVNAARAKFRTVAIIARSLGTFTPQHHISLKESTAKQTGMKYRNLGKSGLRVSCLGLGTWVTFGGQISDEVAERLMTIAYESGVNLFDTAEVYAAGKAEVILGSIIKKKGWRRSSLVITTKLYWGGKAETERGLSRKHIIEGLKGSLQRLQLEYVDVVFANRPDSNTPMEEIVRAMTHVINQGMAMYWGTSRWSAMEIMEAYSVARQFNMIPPVCEQAEYHLFQREKVEVQLPELYHKIGVGAMTWSPLACGIISGKYGNGVPESSRASLKCYQWLKERIVSEEGRKQQNKLKDLSPIAERLGCTLPQLAVAWCLRNEGVSSVLLGSSTPEQLIENLGAIQVLPKMTSHVVNEIDNILRNKPYSKKDYRS.

Residues Thr-90, Trp-91, Gln-97, and Asp-119 each coordinate NADP(+). The active-site Proton donor/acceptor is the Tyr-124. NADP(+)-binding residues include Asn-192, Ser-222, Arg-223, Gln-248, Trp-277, Ser-278, Pro-279, Leu-280, Ala-281, Cys-282, Lys-288, Arg-298, Gly-357, Ser-359, Gln-363, Glu-366, and Asn-367.

Belongs to the shaker potassium channel beta subunit family. Homotetramer. Interaction with tetrameric potassium channel alpha subunits gives rise to a heterooctamer. Identified in potassium channel complexes containing KCNA1, KCNA2, KCNA4, KCNA5, KCNA6, KCNAB1 and KCNAB2. Part of a complex containing KCNA1, KCNA4 and LGI1; interaction with LGI1 inhibits down-regulation of KCNA1 channel activity. Interacts with the dimer formed by GNB1 and GNG2; this enhances KCNA1 binding. Interacts with SQSTM1.

It localises to the cytoplasm. Its subcellular location is the membrane. The protein localises to the cell membrane. The catalysed reaction is a primary alcohol + NADP(+) = an aldehyde + NADPH + H(+). It catalyses the reaction a secondary alcohol + NADP(+) = a ketone + NADPH + H(+). Functionally, regulatory subunit of the voltage-gated potassium (Kv) channels composed of pore-forming and potassium-conducting alpha subunits and of regulatory beta subunits. The beta-1/KCNAB1 cytoplasmic subunit mediates closure of delayed rectifier potassium channels by physically obstructing the pore via its N-terminal domain and increases the speed of channel closure for other family members. Promotes the inactivation of KCNA1, KCNA2, KCNA4, KCNA5 and KCNA6 alpha subunit-containing channels. Displays nicotinamide adenine dinucleotide phosphate (NADPH)-dependent aldoketoreductase activity by catalyzing the NADPH-dependent reduction of a variety of endogenous aldehydes and ketones. The binding of NADPH is required for efficient down-regulation of potassium channel activity. Oxidation of the bound NADPH restrains N-terminal domain from blocking the channel, thereby decreasing N-type inactivation of potassium channel activity. This chain is Voltage-gated potassium channel subunit beta-1 (KCNAB1), found in Bos taurus (Bovine).